Here is a 205-residue protein sequence, read N- to C-terminus: MIGRLRGVLVEKQAPEILMDVNGVGYELQMPLTSFYELPEIDHETVVYTHFVVREDAQLLYGFITKQERALFRLLIKTNGVGPKLALTILSGMTASEFVGCVERDDIVTLVKLPGVGKKTAERLLVEMRDKLKSLMEASAGSEREFVLQSNYSPTPTVNSAEEDAISALISLGYKPPQASKSVSAAYKEGMDSETLIKAALKSML.

The segment at 1-64 (MIGRLRGVLV…EDAQLLYGFI (64 aa)) is domain I. The interval 65–143 (TKQERALFRL…SLMEASAGSE (79 aa)) is domain II. The segment at 144-156 (REFVLQSNYSPTP) is flexible linker. Positions 157 to 205 (TVNSAEEDAISALISLGYKPPQASKSVSAAYKEGMDSETLIKAALKSML) are domain III.

The protein belongs to the RuvA family. As to quaternary structure, homotetramer. Forms an RuvA(8)-RuvB(12)-Holliday junction (HJ) complex. HJ DNA is sandwiched between 2 RuvA tetramers; dsDNA enters through RuvA and exits via RuvB. An RuvB hexamer assembles on each DNA strand where it exits the tetramer. Each RuvB hexamer is contacted by two RuvA subunits (via domain III) on 2 adjacent RuvB subunits; this complex drives branch migration. In the full resolvosome a probable DNA-RuvA(4)-RuvB(12)-RuvC(2) complex forms which resolves the HJ.

The protein resides in the cytoplasm. Functionally, the RuvA-RuvB-RuvC complex processes Holliday junction (HJ) DNA during genetic recombination and DNA repair, while the RuvA-RuvB complex plays an important role in the rescue of blocked DNA replication forks via replication fork reversal (RFR). RuvA specifically binds to HJ cruciform DNA, conferring on it an open structure. The RuvB hexamer acts as an ATP-dependent pump, pulling dsDNA into and through the RuvAB complex. HJ branch migration allows RuvC to scan DNA until it finds its consensus sequence, where it cleaves and resolves the cruciform DNA. This chain is Holliday junction branch migration complex subunit RuvA, found in Shewanella sp. (strain W3-18-1).